Here is a 61-residue protein sequence, read N- to C-terminus: Photosystem II reaction center protein K (61 aa).

Residues 1–24 (MLNIFNLICICFNSALFSSTFLVA) constitute a propeptide that is removed on maturation. The helical transmembrane segment at 40–60 (MPVIPLFFLLLAFVWQAAVSF) threads the bilayer.

Belongs to the PsbK family. PSII is composed of 1 copy each of membrane proteins PsbA, PsbB, PsbC, PsbD, PsbE, PsbF, PsbH, PsbI, PsbJ, PsbK, PsbL, PsbM, PsbT, PsbX, PsbY, PsbZ, Psb30/Ycf12, at least 3 peripheral proteins of the oxygen-evolving complex and a large number of cofactors. It forms dimeric complexes.

It localises to the plastid. The protein localises to the chloroplast thylakoid membrane. In terms of biological role, one of the components of the core complex of photosystem II (PSII). PSII is a light-driven water:plastoquinone oxidoreductase that uses light energy to abstract electrons from H(2)O, generating O(2) and a proton gradient subsequently used for ATP formation. It consists of a core antenna complex that captures photons, and an electron transfer chain that converts photonic excitation into a charge separation. In Sinapis alba (White mustard), this protein is Photosystem II reaction center protein K.